Consider the following 745-residue polypeptide: DNA ligase (745 aa).

Positions 1–27 are disordered; it reads MRNHGPGSERKDACVSAPDPTFSDDVP. NAD(+) is bound by residues 57–61, 106–107, and Glu135; these read DAEYD and SL. The active-site N6-AMP-lysine intermediate is Lys137. NAD(+) is bound by residues Arg158 and Glu197. Residues 216–235 form a disordered region; sequence GKPPFANPRNAAAGSLRQKD. NAD(+) contacts are provided by Lys313 and Lys337. Zn(2+) contacts are provided by Cys431, Cys434, Cys450, and Cys456. Residues 649–738 enclose the BRCT domain; the sequence is DGPRLLDGIT…PEAARAARLS (90 aa).

This sequence belongs to the NAD-dependent DNA ligase family. LigA subfamily. The cofactor is Mg(2+). Mn(2+) serves as cofactor.

It carries out the reaction NAD(+) + (deoxyribonucleotide)n-3'-hydroxyl + 5'-phospho-(deoxyribonucleotide)m = (deoxyribonucleotide)n+m + AMP + beta-nicotinamide D-nucleotide.. In terms of biological role, DNA ligase that catalyzes the formation of phosphodiester linkages between 5'-phosphoryl and 3'-hydroxyl groups in double-stranded DNA using NAD as a coenzyme and as the energy source for the reaction. It is essential for DNA replication and repair of damaged DNA. This Thermobifida fusca (strain YX) protein is DNA ligase.